The chain runs to 209 residues: Uracil phosphoribosyltransferase (209 aa).

5-phospho-alpha-D-ribose 1-diphosphate-binding positions include Arg77, Arg102, and 129-137 (DPMLATGSS). Residues Ile192 and 197–199 (GDA) each bind uracil. Residue Asp198 participates in 5-phospho-alpha-D-ribose 1-diphosphate binding.

This sequence belongs to the UPRTase family. Mg(2+) is required as a cofactor.

The enzyme catalyses UMP + diphosphate = 5-phospho-alpha-D-ribose 1-diphosphate + uracil. It participates in pyrimidine metabolism; UMP biosynthesis via salvage pathway; UMP from uracil: step 1/1. Its activity is regulated as follows. Allosterically activated by GTP. Functionally, catalyzes the conversion of uracil and 5-phospho-alpha-D-ribose 1-diphosphate (PRPP) to UMP and diphosphate. This Metamycoplasma hominis (Mycoplasma hominis) protein is Uracil phosphoribosyltransferase.